A 219-amino-acid chain; its full sequence is MKSLFVAGTGTDLGKTHVACALLEAARAGGLSVDAFKPVVSGFDPDAPDDSDPARLARALGRPEAWTDVSPRRYRAPLAPNIAARLEGDTLQMDDLITDCREWLIGRDVGLALIEGAGGVMSPMTDEATNLDLMVALGLPVLLVAGSYLGTASHLLTALEVLRARGLSIAAIVVSESLDAPDLDQTLGLLRAFEHQATILSAPRAGNWDAGSLVDLLMA.

12-17 (DLGKTH) is an ATP binding site. Residue Thr-16 participates in Mg(2+) binding. Lys-37 is a catalytic residue. Ser-41 serves as a coordination point for substrate. ATP is bound by residues Asp-52, 115–118 (EGAG), and 175–176 (SE). 2 residues coordinate Mg(2+): Asp-52 and Glu-115.

It belongs to the dethiobiotin synthetase family. Homodimer. Mg(2+) is required as a cofactor.

The protein localises to the cytoplasm. The enzyme catalyses (7R,8S)-7,8-diammoniononanoate + CO2 + ATP = (4R,5S)-dethiobiotin + ADP + phosphate + 3 H(+). It functions in the pathway cofactor biosynthesis; biotin biosynthesis; biotin from 7,8-diaminononanoate: step 1/2. Functionally, catalyzes a mechanistically unusual reaction, the ATP-dependent insertion of CO2 between the N7 and N8 nitrogen atoms of 7,8-diaminopelargonic acid (DAPA, also called 7,8-diammoniononanoate) to form a ureido ring. The polypeptide is ATP-dependent dethiobiotin synthetase BioD (Caulobacter vibrioides (strain ATCC 19089 / CIP 103742 / CB 15) (Caulobacter crescentus)).